The sequence spans 401 residues: Adenosine 3'-phospho 5'-phosphosulfate transporter 2 (401 aa).

N-linked (GlcNAc...) asparagine glycosylation is found at asparagine 12 and asparagine 71. Transmembrane regions (helical) follow at residues 78–98 (LTQF…YGYL), 111–131 (YGWY…LIEL), 147–167 (MIIA…LGYL), 170–190 (PTQV…GVFI), 200–220 (VSAA…DSTI), and 223–243 (NFNL…AVIG). N-linked (GlcNAc...) asparagine glycosylation is present at asparagine 254. 4 helical membrane passes run 267 to 287 (IGFV…PAVT), 298 to 317 (GYAF…VLAL), 324 to 346 (LIAV…IFFA), and 349 to 369 (FTFQ…LNVY).

Belongs to the nucleotide-sugar transporter family. SLC35B subfamily.

Its subcellular location is the golgi apparatus membrane. The catalysed reaction is 3'-phosphoadenylyl sulfate(in) + adenosine 3',5'-bisphosphate(out) = 3'-phosphoadenylyl sulfate(out) + adenosine 3',5'-bisphosphate(in). Its function is as follows. Probably functions as a 3'-phosphoadenylyl sulfate:adenosine 3',5'-bisphosphate antiporter at the Golgi membranes. Mediates the transport from the cytosol into the lumen of the Golgi of 3'-phosphoadenylyl sulfate/adenosine 3'-phospho 5'-phosphosulfate (PAPS), a universal sulfuryl donor for sulfation events that take place in that compartment. This Pongo abelii (Sumatran orangutan) protein is Adenosine 3'-phospho 5'-phosphosulfate transporter 2.